Here is a 390-residue protein sequence, read N- to C-terminus: Flap endonuclease 1-2 (390 aa).

An N-domain region spans residues 1-108 (MGIHQLMQFL…GELARRKKLK (108 aa)). Residue D34 coordinates Mg(2+). R74 is a DNA binding site. Mg(2+) contacts are provided by D90, E162, E164, D183, and D185. Residues 126–254 (QALLQNQRTT…GTAYKLIKEY (129 aa)) form an I-domain region. A DNA-binding site is contributed by E162. Positions 232 and 234 each coordinate DNA. D234 is a Mg(2+) binding site. The segment at 348 to 356 (FQSRLENFF) is interaction with PCNA. Residues 359–390 (TTKIIHPNNSKAKAKSNKKTEQPQKSGGKKKI) are disordered.

It belongs to the XPG/RAD2 endonuclease family. FEN1 subfamily. In terms of assembly, interacts with PCNA. Three molecules of FEN1 bind to one PCNA trimer with each molecule binding to one PCNA monomer. PCNA stimulates the nuclease activity without altering cleavage specificity. It depends on Mg(2+) as a cofactor. Post-translationally, phosphorylated. Phosphorylation upon DNA damage induces relocalization to the nuclear plasma.

The protein resides in the nucleus. It localises to the nucleolus. The protein localises to the nucleoplasm. It is found in the mitochondrion. Functionally, structure-specific nuclease with 5'-flap endonuclease and 5'-3' exonuclease activities involved in DNA replication and repair. During DNA replication, cleaves the 5'-overhanging flap structure that is generated by displacement synthesis when DNA polymerase encounters the 5'-end of a downstream Okazaki fragment. It enters the flap from the 5'-end and then tracks to cleave the flap base, leaving a nick for ligation. Also involved in the long patch base excision repair (LP-BER) pathway, by cleaving within the apurinic/apyrimidinic (AP) site-terminated flap. Acts as a genome stabilization factor that prevents flaps from equilibrating into structures that lead to duplications and deletions. Also possesses 5'-3' exonuclease activity on nicked or gapped double-stranded DNA, and exhibits RNase H activity. Also involved in replication and repair of rDNA and in repairing mitochondrial DNA. This chain is Flap endonuclease 1-2, found in Paramecium tetraurelia.